A 177-amino-acid polypeptide reads, in one-letter code: dCTP deaminase, dUMP-forming (177 aa).

Residues 95 to 100 (RSSLGR), Asp112, 120 to 122 (TLE), Gln141, Tyr155, and Gln162 contribute to the dCTP site. Glu122 acts as the Proton donor/acceptor in catalysis.

Belongs to the dCTP deaminase family. Homotrimer.

The enzyme catalyses dCTP + 2 H2O = dUMP + NH4(+) + diphosphate. It functions in the pathway pyrimidine metabolism; dUMP biosynthesis; dUMP from dCTP: step 1/1. Bifunctional enzyme that catalyzes both the deamination of dCTP to dUTP and the hydrolysis of dUTP to dUMP without releasing the toxic dUTP intermediate. The polypeptide is dCTP deaminase, dUMP-forming (Hydrogenobaculum sp. (strain Y04AAS1)).